A 132-amino-acid chain; its full sequence is Intraflagellar transport protein 20 homolog (132 aa).

The segment at 70–132 (MKAIGARNLL…EFIDQFIFQK (63 aa)) is IFT57-binding. Residues 74–116 (GARNLLKSIAKQREAQQQQLQALIAEKKTQLERYRVEYEALCK) are a coiled coil.

Component of the IFT complex B, at least composed of IFT20, IFT22, IFT25, IFT27, IFT46, IFT52, TRAF3IP1/IFT54, IFT57, IFT74, IFT80, IFT81, and IFT88. Interacts directly with IFT57 and KIF3B/Kinesin II subunit. Interacts with IFT88. Interacts with CEP83. Interacts with SPEF2 (via C-terminus). Interacts with CBL and CBLB. Interacts with TRIP11. Interacts with TTC21A. Interacts with SPATA1. Interacts with USH1G. Interacts with CCDC146. Interacts with CEP78; regulating IFT20 stability and localization. Expressed predominantly in the testis (at protein level). Expressed in kidney and retina. Expression is up-regulated during spermiogenesis.

Its subcellular location is the golgi apparatus. It is found in the cis-Golgi network. The protein localises to the cytoplasm. The protein resides in the cytoskeleton. It localises to the microtubule organizing center. Its subcellular location is the centrosome. It is found in the centriole. The protein localises to the cilium basal body. The protein resides in the cell projection. It localises to the cilium. Its subcellular location is the cytoplasmic vesicle. It is found in the secretory vesicle. The protein localises to the acrosome. Functionally, part of intraflagellar transport (IFT) particles involved in ciliary process assembly. May play a role in the trafficking of ciliary membrane proteins from the Golgi complex to the cilium. Regulates the ciliary platelet-derived growth factor receptor-alpha (PDGFRA) signaling pathway. Required for protein stability of E3 ubiquitin ligases CBL and CBLB that mediate ubiquitination and internalization of PDGFRA for proper feedback inhibition of PDGFRA signaling. Essential for male fertility. Plays an important role in spermatogenesis, particularly spermiogenesis, when germ cells form flagella. May play a role in the transport of flagellar proteins ODF2 and SPAG16 to build sperm flagella and in the removal of redundant sperm cytoplasm. Also involved in autophagy since it is required for trafficking of ATG16L and the expansion of the autophagic compartment. This is Intraflagellar transport protein 20 homolog (Ift20) from Mus musculus (Mouse).